Reading from the N-terminus, the 964-residue chain is MVDIVDKALRMGEGHQLKKLENVAKAVNALEDEISALSDEDLKAQTPKFKQEIENGKSLDEIMPEAFATVREVSKRTLGQRHFDVQLMGGAALHWGNIAEMKTGEGKTLVATLPTYLNALEGKGVHVVTVNDYLASYQSELMGRIYRFLGMNVGCIITEQKPPERRKQYNADITYGTNNEFGFDYLRDNMAWEKADLVQRGHHYAIVDEVDSILIDEARTPLIISGPAEGDVTRWYRQFAKLVLKLTRDEDYDVDEKKKVVGILDPGITKVEDFLGIDNLYEPANTALIGYLNNAIKAKELFLRDKDYVVTQGEVLIVDEHTGRILPGRRYNEGLHQAIEAKEGVEVKAENQTFATITLQNYFRMYDKLAGMTGTAETEAAEFMNTYKLGVLPIKTNKPMIRKDQDDLIYRTKKEKLAAIVKDVAKRHAEGQPVLLGTASVESSEVVSALLDVAKIPHQVLNAKQHEKEAAVVAVAGRKGAVTVATNMAGRGTDIMLGGNVEFLADAKLKSEGYSPEDTPEEYEKRWPGTLNEIKAQVKDEHEEVKELGGLYVLGTERHESRRIDNQLRGRSGRQGDPGESRFYLSLEDDLMRLFNTQLVAQVMARGMEEGQPIEAKSVTKGVRTAQKAVESRNYEIRKNVLKYDDVMNKQRTVIYSERQAVLKGEDIHKDILRFISDTVESYIKGANKGSEKPKDWDWEGLFKALNTVIPTKVDEDEVRKIVGGLKGAKAVEAVRDLIVEDARQQYGEMEETIGETGLRDLERRVVLAVLDRKWREHLYEMDYLKDGIGLRGMGQRDPLVEYQREGYQMYNSMIEAIKEETVQLLFHIDIKQVATTDDAVDEVEETAESADTIAVASGPDENGESVVEAAEGEVEEEDEDTDAKQAIAESAAASEAGESTLPVAGPAPVSHAEGKVPVSKRPKSEELKTPWADGRTFPGTGKNAPCPCGSGRKYKMCHGQNEA.

ATP contacts are provided by residues Gln-86, 104-108, and Asp-494; that span reads GEGKT. Residues 846 to 964 form a disordered region; that stretch reads ETAESADTIA…YKMCHGQNEA (119 aa). Residues 871-882 show a composition bias toward acidic residues; the sequence is AEGEVEEEDEDT. Residues 887 to 900 show a composition bias toward low complexity; the sequence is AIAESAAASEAGES. Positions 947, 949, 958, and 959 each coordinate Zn(2+).

This sequence belongs to the SecA family. Monomer and homodimer. Part of the essential Sec protein translocation apparatus which comprises SecA, SecYEG and auxiliary proteins SecDF. Other proteins may also be involved. Zn(2+) is required as a cofactor.

The protein resides in the cell membrane. It is found in the cytoplasm. The catalysed reaction is ATP + H2O + cellular proteinSide 1 = ADP + phosphate + cellular proteinSide 2.. Functionally, part of the Sec protein translocase complex. Interacts with the SecYEG preprotein conducting channel. Has a central role in coupling the hydrolysis of ATP to the transfer of proteins into and across the cell membrane, serving as an ATP-driven molecular motor driving the stepwise translocation of polypeptide chains across the membrane. In Bifidobacterium longum subsp. infantis (strain ATCC 15697 / DSM 20088 / JCM 1222 / NCTC 11817 / S12), this protein is Protein translocase subunit SecA.